The following is a 420-amino-acid chain: Inheritance of peroxisomes protein 1 (420 aa).

Positions 1–10 (MVLSRGETKK) are enriched in basic and acidic residues. Disordered regions lie at residues 1 to 75 (MVLS…QRKR) and 273 to 309 (SLSD…NYDD). Low complexity predominate over residues 30–39 (LKQSLKLSNN). The segment covering 45-56 (DSTQHSNDTNKS) has biased composition (polar residues). Serine 273 carries the phosphoserine modification. A compositionally biased stretch (acidic residues) spans 295 to 309 (NNDDDNDDDDDNYDD).

Belongs to the INP1 family. Interacts with PEX25, PEX30 and VPS1.

It is found in the peroxisome membrane. Required for peroxisome inheritance. The chain is Inheritance of peroxisomes protein 1 (INP1) from Saccharomyces cerevisiae (strain ATCC 204508 / S288c) (Baker's yeast).